Consider the following 715-residue polypeptide: Probable serine/threonine-protein kinase MARK-B (715 aa).

A compositionally biased stretch (low complexity) spans Ser24–Ser37. The interval Ser24–Tyr65 is disordered. In terms of domain architecture, Protein kinase spans Tyr65–Val320. Residues Ile71–Val79 and Lys94 contribute to the ATP site. Asp187 (proton acceptor) is an active-site residue. Residues Lys335–Gln344 show a composition bias toward basic and acidic residues. Disordered stretches follow at residues Lys335–Asn399 and Cys446–Thr530. Positions Gln345 to Ser368 are enriched in low complexity. Positions Ile381–Asn399 are enriched in polar residues. 2 stretches are compositionally biased toward low complexity: residues Ser451 to Ser478 and Ser487 to Ser513. Basic residues predominate over residues Gln517–His527. Residues Leu666–Leu715 enclose the KA1 domain.

This sequence belongs to the protein kinase superfamily. CAMK Ser/Thr protein kinase family. SNF1 subfamily.

It carries out the reaction L-seryl-[protein] + ATP = O-phospho-L-seryl-[protein] + ADP + H(+). The catalysed reaction is L-threonyl-[protein] + ATP = O-phospho-L-threonyl-[protein] + ADP + H(+). The sequence is that of Probable serine/threonine-protein kinase MARK-B (mrkB) from Dictyostelium discoideum (Social amoeba).